The primary structure comprises 113 residues: Putative membrane protein insertion efficiency factor (113 aa).

Belongs to the UPF0161 family.

It is found in the cell inner membrane. Functionally, could be involved in insertion of integral membrane proteins into the membrane. The chain is Putative membrane protein insertion efficiency factor from Campylobacter concisus (strain 13826).